The chain runs to 81 residues: uncharacterized protein (81 aa).

This is an uncharacterized protein from Synechocystis sp. (strain ATCC 27184 / PCC 6803 / Kazusa).